Reading from the N-terminus, the 822-residue chain is Glycerol-3-phosphate acyltransferase (822 aa).

The HXXXXD motif signature appears at Cys-304–Met-309.

Belongs to the GPAT/DAPAT family.

The protein resides in the cell inner membrane. It catalyses the reaction sn-glycerol 3-phosphate + an acyl-CoA = a 1-acyl-sn-glycero-3-phosphate + CoA. It functions in the pathway phospholipid metabolism; CDP-diacylglycerol biosynthesis; CDP-diacylglycerol from sn-glycerol 3-phosphate: step 1/3. This Yersinia enterocolitica serotype O:8 / biotype 1B (strain NCTC 13174 / 8081) protein is Glycerol-3-phosphate acyltransferase.